Consider the following 201-residue polypeptide: MLDLGWSEILVIAVVLIVVVGPKDLPRVLRSFGRTTAKMRAMAGDFRRQFDEALREAELDDMKGLVDDVRKLDPRSEIRKHLSPLEEAGKEIRSGLSEAAKAKPAASSLPAADSKPAEPLKNGATSLGPEAPPPVTGETAAPKVSEKAEVGAVAASPGTSAKQAAPKAKAAAAAKAPTKNTASAPAKKPSPRRKKTAGTAP.

The helical transmembrane segment at 1–21 threads the bilayer; the sequence is MLDLGWSEILVIAVVLIVVVG. The interval 96-201 is disordered; the sequence is LSEAAKAKPA…RRKKTAGTAP (106 aa). Low complexity-rich tracts occupy residues 102-114 and 159-187; these read AKPAASSLPAADS and TSAKQAAPKAKAAAAAKAPTKNTASAPAK. Basic residues predominate over residues 189–201; the sequence is PSPRRKKTAGTAP.

The protein belongs to the TatB family. The Tat system comprises two distinct complexes: a TatABC complex, containing multiple copies of TatA, TatB and TatC subunits, and a separate TatA complex, containing only TatA subunits. Substrates initially bind to the TatABC complex, which probably triggers association of the separate TatA complex to form the active translocon.

The protein localises to the cell inner membrane. Part of the twin-arginine translocation (Tat) system that transports large folded proteins containing a characteristic twin-arginine motif in their signal peptide across membranes. Together with TatC, TatB is part of a receptor directly interacting with Tat signal peptides. TatB may form an oligomeric binding site that transiently accommodates folded Tat precursor proteins before their translocation. This Chelativorans sp. (strain BNC1) protein is Sec-independent protein translocase protein TatB.